We begin with the raw amino-acid sequence, 909 residues long: WD repeat-containing protein 20 homolog (909 aa).

The tract at residues 58–132 (SPAQGKLGSD…SAGNNTVEAR (75 aa)) is disordered. Low complexity-rich tracts occupy residues 80–107 (GANT…AISN) and 115–127 (SHSN…AGNN). 4 WD repeats span residues 248-288 (IDKT…AATA), 321-362 (TDNC…GIAR), 363-402 (SYFG…VVAR), and 470-517 (ADRN…LRHP). Disordered regions lie at residues 458 to 483 (FEGF…FRSD), 554 to 628 (SGQA…AGSV), 661 to 699 (SDSI…NSGS), 720 to 739 (SEKK…RQHR), and 749 to 775 (NQHN…GHSS). Polar residues-rich tracts occupy residues 555-569 (GQAT…SCSP) and 595-606 (TANCTISSQSSP). Low complexity-rich tracts occupy residues 612–628 (EAAT…AGSV) and 673–699 (GQRP…NSGS). A WD 5 repeat occupies 856–893 (IAHERLTALIFREDCFLTACQDGFIYTWARPGHATHAT).

As to quaternary structure, component of the Usp12-46 deubiquitylase complex consisting of Usp12-46, Wdr20 and Uaf1; regulatory subunit that, together with Uaf1, stabilizes Usp12-46. The Usp12-46 deubiquitylase complex associates with arr/arrow; the interaction leads to deubiquitination and stabilization of arr/arrow.

Regulatory component of the Usp12-46 deubiquitylase complex. This complex deubiquitylates the wg/wingless-signaling receptor arr/arrow, which stabilizes the receptor and increases its concentration at the cell surface; this enhances the sensitivity of cells to wg/wingless-signal stimulation. This increases the amplitude and spatial range of the signaling response to the wg/wingless morphogen gradient, facilitating the precise concentration-dependent regulation of its target genes. Required for wg/wingless-mediated signaling in the wing imaginal disc and for wg/wingless-dependent regulation of intestinal stem cell proliferation. This Drosophila melanogaster (Fruit fly) protein is WD repeat-containing protein 20 homolog.